The following is a 328-amino-acid chain: 4-hydroxythreonine-4-phosphate dehydrogenase (328 aa).

Positions 134 and 135 each coordinate substrate. A divalent metal cation-binding residues include H164, H209, and H264. Substrate contacts are provided by K272, N281, and R290.

The protein belongs to the PdxA family. In terms of assembly, homodimer. It depends on Zn(2+) as a cofactor. Mg(2+) is required as a cofactor. Requires Co(2+) as cofactor.

The protein resides in the cytoplasm. It catalyses the reaction 4-(phosphooxy)-L-threonine + NAD(+) = 3-amino-2-oxopropyl phosphate + CO2 + NADH. It participates in cofactor biosynthesis; pyridoxine 5'-phosphate biosynthesis; pyridoxine 5'-phosphate from D-erythrose 4-phosphate: step 4/5. In terms of biological role, catalyzes the NAD(P)-dependent oxidation of 4-(phosphooxy)-L-threonine (HTP) into 2-amino-3-oxo-4-(phosphooxy)butyric acid which spontaneously decarboxylates to form 3-amino-2-oxopropyl phosphate (AHAP). This is 4-hydroxythreonine-4-phosphate dehydrogenase from Shewanella denitrificans (strain OS217 / ATCC BAA-1090 / DSM 15013).